Here is a 283-residue protein sequence, read N- to C-terminus: Phytanoyl-CoA dioxygenase (283 aa).

2-oxoglutarate contacts are provided by residues lysine 99, methionine 138, 153 to 155, and tryptophan 170; that span reads HQD. Fe cation contacts are provided by histidine 153 and aspartate 155. Residue histidine 238 participates in Fe cation binding. The 2-oxoglutarate site is built by serine 240 and arginine 249.

It belongs to the PhyH family. The cofactor is Fe cation. L-ascorbate is required as a cofactor.

It carries out the reaction phytanoyl-CoA + 2-oxoglutarate + O2 = 2-hydroxyphytanoyl-CoA + succinate + CO2. Its pathway is lipid metabolism; fatty acid metabolism. In terms of biological role, converts phytanoyl-CoA to 2-hydroxyphytanoyl-CoA. In Arabidopsis thaliana (Mouse-ear cress), this protein is Phytanoyl-CoA dioxygenase.